The following is a 258-amino-acid chain: UPF0246 protein LHK_02295 (258 aa).

Belongs to the UPF0246 family.

In Laribacter hongkongensis (strain HLHK9), this protein is UPF0246 protein LHK_02295.